Here is a 595-residue protein sequence, read N- to C-terminus: Beta-(1--&gt;2)glucan export ATP-binding/permease protein NdvA (595 aa).

An ABC transmembrane type-1 domain is found at 21 to 301 (SLLICAANVM…MSNFINLTVS (281 aa)). 5 consecutive transmembrane segments (helical) span residues 22-42 (LLIC…PILF), 55-75 (IILT…AYVL), 128-148 (AIWL…FILI), 152-172 (FNMN…YVLI), and 248-268 (TAST…VAKG). An ABC transporter domain is found at 335–569 (VQFHHVTYKF…GGRFYKLLKA (235 aa)). 368 to 375 (GPTGAGKT) is an ATP binding site.

Belongs to the ABC transporter superfamily. Beta-(1--&gt;2)glucan exporter (TC 3.A.1.108.1) family. Homodimer.

The protein localises to the cell inner membrane. It carries out the reaction [(1-&gt;2)-beta-D-glucosyl](n)(in) + ATP + H2O = [(1-&gt;2)-beta-D-glucosyl](n)(out) + ADP + phosphate + H(+). Functionally, involved in beta-(1--&gt;2)glucan export. Transmembrane domains (TMD) form a pore in the inner membrane and the ATP-binding domain (NBD) is responsible for energy generation. The sequence is that of Beta-(1--&gt;2)glucan export ATP-binding/permease protein NdvA from Bartonella quintana (strain Toulouse) (Rochalimaea quintana).